Consider the following 107-residue polypeptide: Polyketide synthase CurG (107 aa).

It functions in the pathway antibiotic biosynthesis; curamycin biosynthesis. In Streptomyces cyaneus (Streptomyces curacoi), this protein is Polyketide synthase CurG (curG).